The following is a 237-amino-acid chain: Ribosomal RNA small subunit methyltransferase G (237 aa).

S-adenosyl-L-methionine-binding positions include glycine 78, phenylalanine 83, 129–130, and arginine 148; that span reads AE. Residues 218 to 237 are disordered; sequence KKETPRKYPRKAGTPNKKPL.

This sequence belongs to the methyltransferase superfamily. RNA methyltransferase RsmG family.

It is found in the cytoplasm. Specifically methylates the N7 position of a guanine in 16S rRNA. The protein is Ribosomal RNA small subunit methyltransferase G of Streptococcus uberis (strain ATCC BAA-854 / 0140J).